A 161-amino-acid chain; its full sequence is Cell division protein SepF 2 (161 aa).

Residues 19–47 (EDSEKAPELSSSRETKTKNQNQSKSLLRS) are disordered. Residues 21-35 (SEKAPELSSSRETKT) are compositionally biased toward basic and acidic residues.

It belongs to the SepF family. Homodimer. Interacts with FtsZ.

It localises to the cytoplasm. Cell division protein that is part of the divisome complex and is recruited early to the Z-ring. Probably stimulates Z-ring formation, perhaps through the cross-linking of FtsZ protofilaments. Its function overlaps with FtsA. In Desulforamulus reducens (strain ATCC BAA-1160 / DSM 100696 / MI-1) (Desulfotomaculum reducens), this protein is Cell division protein SepF 2.